We begin with the raw amino-acid sequence, 200 residues long: Large ribosomal subunit protein uL4 (200 aa).

The disordered stretch occupies residues 38 to 73 (GRQGTKGQKSRSDVSGGGKRPWRQKGTGRARAGTTR).

It belongs to the universal ribosomal protein uL4 family. In terms of assembly, part of the 50S ribosomal subunit.

One of the primary rRNA binding proteins, this protein initially binds near the 5'-end of the 23S rRNA. It is important during the early stages of 50S assembly. It makes multiple contacts with different domains of the 23S rRNA in the assembled 50S subunit and ribosome. In terms of biological role, forms part of the polypeptide exit tunnel. This Ectopseudomonas mendocina (strain ymp) (Pseudomonas mendocina) protein is Large ribosomal subunit protein uL4.